Consider the following 59-residue polypeptide: MAELKITQVRGTIGARWNQRESLRTLGLRKIRQSVVREDNAQTRGLIKTVHHLVVVEEV.

This sequence belongs to the universal ribosomal protein uL30 family. In terms of assembly, part of the 50S ribosomal subunit.

In Mycobacterium sp. (strain JLS), this protein is Large ribosomal subunit protein uL30.